Consider the following 313-residue polypeptide: MNKLVFCLMGPTASGKTGLACELLTHFPFEIISVDSAMIYRDMNIGTAKPSIHELQRAPHYLIDIKDPVESYSAAQFCTDALSLCAEIIKRGNIPLLVGGTMMYFNALQKGLATLPEADEAVRKRLEEEALSQGWDFLYQKLSQLDPVTAARIHAHDTQRIQRALEVYYLTGSTLSTYLTGPHERPDYYFVNLALFPEQRSWLHERIAQRFDAMLSEGFIEEVQQLQAKWPIQINLPSMRCVGYRQILQHLAGHYDYETMREKGIAATRQLAKRQLTWLRHWEGALFYDSQNVGFNTDIIAKIREILDNTVSN.

Residue 10–17 (GPTASGKT) participates in ATP binding. 12-17 (TASGKT) provides a ligand contact to substrate. Interaction with substrate tRNA stretches follow at residues 35–38 (DSAM), 159–163 (QRIQR), and 240–245 (RCVGYR).

The protein belongs to the IPP transferase family. As to quaternary structure, monomer. Requires Mg(2+) as cofactor.

The catalysed reaction is adenosine(37) in tRNA + dimethylallyl diphosphate = N(6)-dimethylallyladenosine(37) in tRNA + diphosphate. Catalyzes the transfer of a dimethylallyl group onto the adenine at position 37 in tRNAs that read codons beginning with uridine, leading to the formation of N6-(dimethylallyl)adenosine (i(6)A). The sequence is that of tRNA dimethylallyltransferase from Legionella pneumophila subsp. pneumophila (strain Philadelphia 1 / ATCC 33152 / DSM 7513).